A 292-amino-acid chain; its full sequence is Histamine N-methyltransferase (292 aa).

Substrate is bound at residue Glu28. S-adenosyl-L-methionine contacts are provided by Gly60, Glu89, Gln94, Ser120, and Ile142. Asn283 is a binding site for substrate.

It belongs to the class I-like SAM-binding methyltransferase superfamily. HNMT family. In terms of assembly, monomer.

It is found in the cytoplasm. The catalysed reaction is histamine + S-adenosyl-L-methionine = N(tau)-methylhistamine + S-adenosyl-L-homocysteine + H(+). Inactivates histamine by N-methylation. Plays an important role in degrading histamine and in regulating the airway response to histamine. The sequence is that of Histamine N-methyltransferase (HNMT) from Pongo abelii (Sumatran orangutan).